Here is a 214-residue protein sequence, read N- to C-terminus: Pyrrolidone-carboxylate peptidase (214 aa).

Active-site residues include E78, C141, and H165.

Belongs to the peptidase C15 family. In terms of assembly, homotetramer.

It is found in the cytoplasm. It catalyses the reaction Release of an N-terminal pyroglutamyl group from a polypeptide, the second amino acid generally not being Pro.. In terms of biological role, removes 5-oxoproline from various penultimate amino acid residues except L-proline. The sequence is that of Pyrrolidone-carboxylate peptidase from Streptococcus pneumoniae (strain 70585).